The primary structure comprises 130 residues: Ribosome-binding factor A (130 aa).

The protein belongs to the RbfA family. Monomer. Binds 30S ribosomal subunits, but not 50S ribosomal subunits or 70S ribosomes.

Its subcellular location is the cytoplasm. One of several proteins that assist in the late maturation steps of the functional core of the 30S ribosomal subunit. Associates with free 30S ribosomal subunits (but not with 30S subunits that are part of 70S ribosomes or polysomes). Required for efficient processing of 16S rRNA. May interact with the 5'-terminal helix region of 16S rRNA. The sequence is that of Ribosome-binding factor A from Prochlorococcus marinus (strain MIT 9301).